We begin with the raw amino-acid sequence, 956 residues long: MWYPPAAVVPFFESHSVTYEDRSAIAKWHFLPFDQRAVNEMTVLLNFLHISQGFHNETLYTDVRRRCMLMRSLFELVFANNYLELTNPKLLGWFLYLTAEDRTLIQNEGGLLSFLKKHPELGVTRQYVYVKAKPKGNYVPPPTTMASNDSRYPTFYGSSGCQNCGTSCPFGTKKCTRCGVHIVISQDKISVSENEKQLQLLPNSLKEELNVFQTSQSNVEMQNIHLGCTQSTLNTRSKQRSPEAHPHFYSKGMCSHAQCLSQLWQEVESREDAKHFKDTSAQASFCLDMELDVQSQVQRNDNTQNNQNQSYNPTEENDHNVDQETMPEYYSFSSISLDHTAWSNGSQSAETGFNDSITATKGSTELSDELSEAANSTAANSTDCFSCVSNSFELAEESGDCLDSRYEQQINKSNVGSSPKSKSSASVYVDQMIDACGDFRAFFTSTCATKTDQTFQVKNVATDTDLPAVSHEKDTQTMRMTTSDKNTITEVYMSDLDVLTEEFIKLKETEKGLKQMKSMNARRLCGCDCAQRVRKAELNLLALQFVMCQQHCWRRYFTSPLGESAYQGTEALPDSIAETLKTLQKDYHEMRQQILAGTPLDDLAPLSVNSEKISTGTNYSPSSVLAAHLDCAGSTIASDHKVDEEHTAMKVPPSEVCQDIETAPDEAKNECSKRDKALFILPKQTRISTEPKTVGANKDLNGSEAWFDAEEELGFPNQDGNMEKPNKMRETMRHKMETKGTDEDVSKQSSLLCITCLPGNITEHEVLLWFEKYNPTNVCISAFSNNTRAAIVYLKSYIDAKAAVEDLNGRSLQGHAVQVVHLSGTVSADLKPSDLSHSASESHKEDTAGDELRTKNLTYGSSHGGPRCSLERLTNVCNSPTASGTCVPQHYATMGSFDTIMARLSERHPNVARQRIVDALLELRAKHQGFLSGLPLRSIVDMTSELLTQTSSSARV.

Residues 301–321 (DNTQNNQNQSYNPTEENDHNV) form a disordered region. Positions 750 to 824 (SLLCITCLPG…HAVQVVHLSG (75 aa)) constitute an RRM domain. The interval 831–855 (KPSDLSHSASESHKEDTAGDELRTK) is disordered. Positions 840–854 (SESHKEDTAGDELRT) are enriched in basic and acidic residues.

The protein resides in the cytoplasm. Component of intercellular bridges during meiosis. Intercellular bridges are evolutionarily conserved structures that connect differentiating germ cells. Not required for fertility. The sequence is that of RNA-binding protein 44 (rbm44) from Danio rerio (Zebrafish).